The primary structure comprises 328 residues: MSAAGLLAPAPAPAAAPAAPEYYPEDEEELESAEDDERSCRGRESDEDTEDASETDLAKHDEEDYVEMKEQMYQDKLASLKRQLQQLQEGTLQEYQKRMKKLDQQYRERIRNAELFLQLETEQVERNYIKEKKAAVKEFEDKKVELKENLIAELEEKKKMIENEKLTMELTGDSMEVKPIMTRKLRRRPNDPVPIPDKRRKPAPAQLNYLLTDEQIMEDLRTLNKLKSPKRPASPSSPEHLPATPAESPAQRFEARIEDGKLYYDKRWYHKSQAIYLESKDNQKLSCVISSVGANEIWVRKTSDSTKMRIYVGQLQRGLFVIRRRSAA.

Residues 1-22 (MSAAGLLAPAPAPAAAPAAPEY) are compositionally biased toward low complexity. A disordered region spans residues 1-69 (MSAAGLLAPA…HDEEDYVEMK (69 aa)). Residue Ser-2 is modified to N-acetylserine. A mediates interaction with USP17L2 region spans residues 2–170 (SAAGLLAPAP…IENEKLTMEL (169 aa)). 2 stretches are compositionally biased toward acidic residues: residues 23–37 (YPED…EDDE) and 45–54 (SDEDTEDASE). Ser-32 and Ser-45 each carry phosphoserine. Thr-49 is modified (phosphothreonine). Position 53 is a phosphoserine (Ser-53). The span at 56–69 (DLAKHDEEDYVEMK) shows a compositional bias: basic and acidic residues. Residues 66–171 (VEMKEQMYQD…ENEKLTMELT (106 aa)) adopt a coiled-coil conformation. Glycyl lysine isopeptide (Lys-Gly) (interchain with G-Cter in SUMO2) cross-links involve residues Lys-69, Lys-178, and Lys-201. A sin3 interaction domain (SID) region spans residues 188–226 (RPNDPVPIPDKRRKPAPAQLNYLLTDEQIMEDLRTLNKL). The tract at residues 226–252 (LKSPKRPASPSSPEHLPATPAESPAQR) is disordered. 3 positions are modified to phosphoserine: Ser-228, Ser-234, and Ser-237. Thr-244 carries the post-translational modification Phosphothreonine.

Belongs to the SDS3 family. In terms of assembly, interacts with HCFC1. Homodimer. Component of the SIN3 histone deacetylase (HDAC) corepressor complex. Interacts with SIN3A. Interaction with SIN3B enhances the interaction between SIN3B and HDAC1 to form a complex. Component of a mSin3A corepressor complex that contains SIN3A, SAP130, SUDS3/SAP45, ARID4B/SAP180, HDAC1 and HDAC2. Interacts with USP17L2; the interaction is direct. Interacts with FOXK2. In terms of processing, polyubiquitinated. 'Lys-63'-polyubiquitinated SUDS3 positively regulates histone deacetylation. Regulated through deubiquitination by USP17L2/USP17 that cleaves 'Lys-63'-linked ubiquitin chains. In terms of tissue distribution, expressed in all newborn tissues tested, including brain, kidney and liver.

Its subcellular location is the nucleus. Its function is as follows. Regulatory protein which represses transcription and augments histone deacetylase activity of HDAC1. May have a potential role in tumor suppressor pathways through regulation of apoptosis. May function in the assembly and/or enzymatic activity of the mSin3A corepressor complex or in mediating interactions between the complex and other regulatory complexes. The polypeptide is Sin3 histone deacetylase corepressor complex component SDS3 (Suds3) (Mus musculus (Mouse)).